A 162-amino-acid chain; its full sequence is Large ribosomal subunit protein uL10 (162 aa).

Belongs to the universal ribosomal protein uL10 family. In terms of assembly, part of the ribosomal stalk of the 50S ribosomal subunit. The N-terminus interacts with L11 and the large rRNA to form the base of the stalk. The C-terminus forms an elongated spine to which L12 dimers bind in a sequential fashion forming a multimeric L10(L12)X complex.

Its function is as follows. Forms part of the ribosomal stalk, playing a central role in the interaction of the ribosome with GTP-bound translation factors. The sequence is that of Large ribosomal subunit protein uL10 from Acholeplasma laidlawii (strain PG-8A).